The following is a 730-amino-acid chain: Dynein axonemal intermediate chain 7 (730 aa).

Over residues 1 to 14 the composition is skewed to basic residues; sequence MAPKSKKAPSKKKM. The segment at 1 to 20 is disordered; it reads MAPKSKKAPSKKKMTKAERL.

It belongs to the DNAI7 family. In terms of assembly, part of the multisubunit axonemal dynein complex formed at least of two heavy chains and a number of intermediate and light chains. Interacts with tubulin. Associates with microtubule. Ubiquitinated. Ubiquitination leads to its degradation through the 26S proteasome. Ubiquitin-proteasome-mediated DNAI7 degradation occurs in mitosis. As to expression, high expressed in lung, kidney, and testis.

It localises to the cell projection. It is found in the cilium. Its subcellular location is the cytoplasm. Functionally, via its association with the multisubunit axonemal dynein complex, is potentially involved in the regulation of cilia function. May also act as a cell cycle regulator. The chain is Dynein axonemal intermediate chain 7 (Dnai7) from Mus musculus (Mouse).